Here is a 137-residue protein sequence, read N- to C-terminus: MLQPKRTKFRKVMKGRNRGLAQRGSKVSFGTIGLQATGRGRITARQIEAARRAMTRHIKRGGKIWIRVFPDKPITNKPLEVRMGKGKGSVEYWVAQIQPGKMLYEMEGVSEDVAREAFRLAAAKLPVSTRVVTRTVM.

The protein belongs to the universal ribosomal protein uL16 family. Part of the 50S ribosomal subunit.

Its function is as follows. Binds 23S rRNA and is also seen to make contacts with the A and possibly P site tRNAs. The chain is Large ribosomal subunit protein uL16 from Alcanivorax borkumensis (strain ATCC 700651 / DSM 11573 / NCIMB 13689 / SK2).